The following is a 79-amino-acid chain: Cytochrome b (79 aa).

3 helical membrane passes run 1–7 (TALLLAM), 31–52 (WLIR…YLHI), and 67–79 (WNIG…TLMA). Heme b is bound by residues H37 and H51.

The protein belongs to the cytochrome b family. The cytochrome bc1 complex contains 11 subunits: 3 respiratory subunits (MT-CYB, CYC1 and UQCRFS1), 2 core proteins (UQCRC1 and UQCRC2) and 6 low-molecular weight proteins (UQCRH/QCR6, UQCRB/QCR7, UQCRQ/QCR8, UQCR10/QCR9, UQCR11/QCR10 and a cleavage product of UQCRFS1). This cytochrome bc1 complex then forms a dimer. Heme b is required as a cofactor.

It is found in the mitochondrion inner membrane. Its function is as follows. Component of the ubiquinol-cytochrome c reductase complex (complex III or cytochrome b-c1 complex) that is part of the mitochondrial respiratory chain. The b-c1 complex mediates electron transfer from ubiquinol to cytochrome c. Contributes to the generation of a proton gradient across the mitochondrial membrane that is then used for ATP synthesis. This chain is Cytochrome b (MT-CYB), found in Corcorax melanoramphos (White-winged chough).